We begin with the raw amino-acid sequence, 350 residues long: WUSCHEL-related homeobox 1 (350 aa).

Positions 72 to 136 form a DNA-binding region, homeobox; WUS-type; sequence MVSSRWNPTP…NHKARERQKR (65 aa). The segment at 283-308 is disordered; it reads TNTETCHRNGDDNKDQEQHEDCSNGE.

The protein belongs to the WUS homeobox family.

It localises to the nucleus. Its function is as follows. Transcription factor which may be involved in developmental processes. The polypeptide is WUSCHEL-related homeobox 1 (WOX1) (Arabidopsis thaliana (Mouse-ear cress)).